A 291-amino-acid polypeptide reads, in one-letter code: Small ribosomal subunit biogenesis GTPase RsgA 1 (291 aa).

In terms of domain architecture, CP-type G spans 63 to 221; that stretch reads ENALVRPPVA…VADTPGFSSI (159 aa). Residues 112 to 115 and 164 to 172 each bind GTP; these read SKMD and GQSGVGKST. Residues C245, C250, H252, and C258 each contribute to the Zn(2+) site.

It belongs to the TRAFAC class YlqF/YawG GTPase family. RsgA subfamily. Monomer. Associates with 30S ribosomal subunit, binds 16S rRNA. Zn(2+) serves as cofactor.

The protein localises to the cytoplasm. Its function is as follows. One of several proteins that assist in the late maturation steps of the functional core of the 30S ribosomal subunit. Helps release RbfA from mature subunits. May play a role in the assembly of ribosomal proteins into the subunit. Circularly permuted GTPase that catalyzes slow GTP hydrolysis, GTPase activity is stimulated by the 30S ribosomal subunit. The chain is Small ribosomal subunit biogenesis GTPase RsgA 1 from Listeria monocytogenes serotype 4b (strain F2365).